The primary structure comprises 88 residues: Small ribosomal subunit protein bS16 (88 aa).

The protein belongs to the bacterial ribosomal protein bS16 family.

The sequence is that of Small ribosomal subunit protein bS16 from Anaeromyxobacter dehalogenans (strain 2CP-1 / ATCC BAA-258).